The chain runs to 3567 residues: Erythronolide synthase EryA2 (3567 aa).

Positions 30–455 constitute a Ketosynthase family 3 (KS3) 1 domain; that stretch reads SDPIAIVSMA…GTNAHVIVEE (426 aa). Module regions lie at residues 33-1467 and 1491-3485; these read IAIV…QHLR and IAIV…EHLR. Cys-202 acts as the Acyl-thioester intermediate; for beta-ketoacyl synthase 1 activity in catalysis. Active-site for beta-ketoacyl synthase 1 activity residues include His-337 and His-377. An acyltransferase 1 region spans residues 560–880; the sequence is VFLFPGQGSQ…MATAHVSGVD (321 aa). The Acyl-ester intermediate; for acyltransferase 1 activity role is filled by Ser-651. The tract at residues 1132 to 1297 is C2-type beta-ketoacyl reductase 1; it reads GTVLVTGAAS…CTSVAWTPWA (166 aa). The For C2-type beta-ketoacyl reductase 1 and probable racemase activity role is filled by Tyr-1267. Positions 1364–1385 are disordered; sequence GRGGQAEAEPDSGPTGEPAQRL. Residues 1395–1470 form the Carrier 1 domain; sequence ENLLELVANA…ALAQHLRARL (76 aa). Position 1430 is an O-(pantetheine 4'-phosphoryl)serine (Ser-1430). Residues 1488–1912 form the Ketosynthase family 3 (KS3) 2 domain; it reads SEPIAIVGIG…GTNAHVIVEE (425 aa). Catalysis depends on Cys-1661, which acts as the Acyl-thioester intermediate; for beta-ketoacyl synthase 2 activity. Active-site for beta-ketoacyl synthase 2 activity residues include His-1796 and His-1834. The interval 2015–2331 is acyltransferase 2; sequence LVFPGQGAQW…NLLRAHVHGV (317 aa). The Acyl-ester intermediate; for acyltransferase 2 activity role is filled by Ser-2105. Residues 2377–2502 form an N-terminal hotdog fold region; sequence HPLLLAAVDV…GTLAQGVAAG (126 aa). Positions 2377-2645 are dehydratase; that stretch reads HPLLLAAVDV…SLVVRSTGEK (269 aa). The region spanning 2377–2648 is the PKS/mFAS DH domain; sequence HPLLLAAVDV…VRSTGEKWEQ (272 aa). His-2409 (proton acceptor; for dehydratase activity) is an active-site residue. A C-terminal hotdog fold region spans residues 2514–2648; it reads AVRIPLDDHY…VRSTGEKWEQ (135 aa). Asp-2571 serves as the catalytic Proton donor; for dehydratase activity. The enoyl reductase stretch occupies residues 2831–3131; sequence GAIDSVAFEP…RGRHVGKLVL (301 aa). Tyr-2874 acts as the For enoyl reductase activity in catalysis. Residues 2964-2973, 3149-3152, 3173-3176, 3202-3203, Lys-3250, and 3272-3273 contribute to the NADP(+) site; these read HAAAGGVGMA, TGTL, SRRG, DT, and FS. The segment at 3141 to 3317 is beta-ketoacyl reductase 2; that stretch reads GTVLITGGTG…AKALGWGLWA (177 aa). Catalysis depends on Tyr-3287, which acts as the For beta-ketoacyl reductase 2 activity. The region spanning 3413-3488 is the Carrier 2 domain; that stretch reads AGLAELVRSH…AVAEHLRDRL (76 aa). Residue Ser-3448 is modified to O-(pantetheine 4'-phosphoryl)serine.

Homodimer. Erythronolide synthase is composed of EryAI, EryAII and EryAIII multimodular (2 modules) polypeptides each coding for a functional synthase subunit which participates in 2 of the six FAS-like elongation steps required for formation of the polyketide. Module 1, 2, 3, 4, 5, and 6 participating in biosynthesis steps 1, 2, 3, 4, 5, and 6, respectively. Pantetheine 4'-phosphate serves as cofactor.

It carries out the reaction 6 (S)-methylmalonyl-CoA + propanoyl-CoA + 6 NADPH + 12 H(+) = 6-deoxyerythronolide B + 6 CO2 + 6 NADP(+) + 7 CoA + H2O. The protein operates within antibiotic biosynthesis; erythromycin biosynthesis. Its function is as follows. Involved in the biosynthesis of antibiotic erythromycin via the biosynthesis of its aglycone precursor, 6-deoxyerythronolide B (6-dEB). This Saccharopolyspora erythraea (Streptomyces erythraeus) protein is Erythronolide synthase EryA2.